The primary structure comprises 491 residues: Ran-binding protein 3 (491 aa).

The segment covering methionine 1–proline 10 has biased composition (basic and acidic residues). Disordered stretches follow at residues methionine 1 to glutamate 177 and valine 255 to serine 292. Alanine 2 bears the N-acetylalanine mark. Residues lysine 9 and lysine 21 each carry the N6-acetyllysine modification. Serine 32, serine 33, and serine 40 each carry phosphoserine. Residues proline 49 to serine 57 carry the Nuclear localization signal motif. The segment covering valine 51–serine 67 has biased composition (basic and acidic residues). Threonine 56 is subject to Phosphothreonine. Serine 58 bears the Phosphoserine mark. 2 stretches are compositionally biased toward polar residues: residues valine 111–valine 124 and proline 133–glutamate 149. Phosphoserine is present on serine 146. Residues glutamate 152 to proline 162 show a composition bias toward basic and acidic residues. Phosphoserine occurs at positions 257, 277, 279, and 296. The span at alanine 275–alanine 286 shows a compositional bias: low complexity. Residues lysine 302–glutamate 442 form the RanBD1 domain. A disordered region spans residues arginine 438–threonine 491. The residue at position 463 (serine 463) is a Phosphoserine.

In terms of assembly, interacts with CHC1 in a Ran-stimulated manner. Interacts with XPO1. Interacts (via its C-terminal R domain) with SMAD2 (dephosphorylated form via its MH1 and MH2 domains); the interaction results in the nuclear export of SMAD2 and termination of the TGF-beta signaling. Interacts (via its C-terminal R domain) with SMAD3 (dephosphorylated form via its MH1 domain); the interaction results in the nuclear export of SMAD3 and termination of the TGF-beta signaling. Phosphorylation at Ser-58 promotes its import into the nucleus.

The protein localises to the cytoplasm. Its subcellular location is the nucleus. In terms of biological role, acts as a cofactor for XPO1/CRM1-mediated nuclear export, perhaps as export complex scaffolding protein. Bound to XPO1/CRM1, stabilizes the XPO1/CRM1-cargo interaction. In the absence of Ran-bound GTP prevents binding of XPO1/CRM1 to the nuclear pore complex. Binds to CHC1/RCC1 and increases the guanine nucleotide exchange activity of CHC1/RCC1. Recruits XPO1/CRM1 to CHC1/RCC1 in a Ran-dependent manner. Negative regulator of TGF-beta signaling through interaction with the R-SMAD proteins, SMAD2 and SMAD3, and mediating their nuclear export. The protein is Ran-binding protein 3 (Ranbp3) of Mus musculus (Mouse).